The chain runs to 132 residues: Large ribosomal subunit protein uL22c (132 aa).

Belongs to the universal ribosomal protein uL22 family. As to quaternary structure, part of the 50S ribosomal subunit.

Its subcellular location is the plastid. It is found in the chloroplast. In terms of biological role, this protein binds specifically to 23S rRNA. The globular domain of the protein is located near the polypeptide exit tunnel on the outside of the subunit, while an extended beta-hairpin is found that lines the wall of the exit tunnel in the center of the 70S ribosome. The sequence is that of Large ribosomal subunit protein uL22c (rpl22) from Populus trichocarpa (Western balsam poplar).